The sequence spans 176 residues: dCTP deaminase (176 aa).

DCTP-binding positions include 99-104 (RSTLAR) and Asp-115. The active-site Proton donor/acceptor is the Glu-125. Gln-163 serves as a coordination point for dCTP.

It belongs to the dCTP deaminase family. Homotrimer.

It catalyses the reaction dCTP + H2O + H(+) = dUTP + NH4(+). The protein operates within pyrimidine metabolism; dUMP biosynthesis; dUMP from dCTP (dUTP route): step 1/2. Catalyzes the deamination of dCTP to dUTP. The protein is dCTP deaminase of Pyrobaculum islandicum (strain DSM 4184 / JCM 9189 / GEO3).